The primary structure comprises 476 residues: Adenosylhomocysteinase (476 aa).

Substrate contacts are provided by threonine 67, aspartate 142, and glutamate 202. 203–205 (TTT) lines the NAD(+) pocket. The substrate site is built by lysine 232 and aspartate 236. NAD(+) contacts are provided by residues asparagine 237, 266 to 271 (GYGDVG), glutamate 289, asparagine 324, 345 to 347 (IGH), and asparagine 390.

This sequence belongs to the adenosylhomocysteinase family. The cofactor is NAD(+).

It is found in the cytoplasm. The catalysed reaction is S-adenosyl-L-homocysteine + H2O = L-homocysteine + adenosine. Its pathway is amino-acid biosynthesis; L-homocysteine biosynthesis; L-homocysteine from S-adenosyl-L-homocysteine: step 1/1. In terms of biological role, may play a key role in the regulation of the intracellular concentration of adenosylhomocysteine. The protein is Adenosylhomocysteinase of Synechococcus sp. (strain WH7803).